The primary structure comprises 510 residues: 2,3-bisphosphoglycerate-independent phosphoglycerate mutase (510 aa).

Asp13 and Ser63 together coordinate Mn(2+). Ser63 (phosphoserine intermediate) is an active-site residue. Substrate is bound by residues His124, Arg154–Asp155, Arg186, Arg192, Arg262–Arg265, and Lys334. Mn(2+) contacts are provided by Asp401, His405, Asp442, His443, and His461.

This sequence belongs to the BPG-independent phosphoglycerate mutase family. As to quaternary structure, monomer. Mn(2+) serves as cofactor.

The enzyme catalyses (2R)-2-phosphoglycerate = (2R)-3-phosphoglycerate. The protein operates within carbohydrate degradation; glycolysis; pyruvate from D-glyceraldehyde 3-phosphate: step 3/5. Its function is as follows. Catalyzes the interconversion of 2-phosphoglycerate and 3-phosphoglycerate. The protein is 2,3-bisphosphoglycerate-independent phosphoglycerate mutase of Vibrio atlanticus (strain LGP32) (Vibrio splendidus (strain Mel32)).